We begin with the raw amino-acid sequence, 402 residues long: 4-hydroxy-3-methylbut-2-enyl diphosphate reductase (402 aa).

A [4Fe-4S] cluster-binding site is contributed by Cys-66. His-96 provides a ligand contact to (2E)-4-hydroxy-3-methylbut-2-enyl diphosphate. Position 96 (His-96) interacts with dimethylallyl diphosphate. His-96 provides a ligand contact to isopentenyl diphosphate. Residue Cys-157 coordinates [4Fe-4S] cluster. His-185 lines the (2E)-4-hydroxy-3-methylbut-2-enyl diphosphate pocket. His-185 is a binding site for dimethylallyl diphosphate. His-185 is an isopentenyl diphosphate binding site. Glu-187 acts as the Proton donor in catalysis. Residue Thr-250 participates in (2E)-4-hydroxy-3-methylbut-2-enyl diphosphate binding. Cys-288 is a binding site for [4Fe-4S] cluster. Ser-317, Ser-318, Asn-319, and Ser-379 together coordinate (2E)-4-hydroxy-3-methylbut-2-enyl diphosphate. Residues Ser-317, Ser-318, Asn-319, and Ser-379 each coordinate dimethylallyl diphosphate. Isopentenyl diphosphate contacts are provided by Ser-317, Ser-318, Asn-319, and Ser-379.

The protein belongs to the IspH family. Requires [4Fe-4S] cluster as cofactor.

The enzyme catalyses isopentenyl diphosphate + 2 oxidized [2Fe-2S]-[ferredoxin] + H2O = (2E)-4-hydroxy-3-methylbut-2-enyl diphosphate + 2 reduced [2Fe-2S]-[ferredoxin] + 2 H(+). It carries out the reaction dimethylallyl diphosphate + 2 oxidized [2Fe-2S]-[ferredoxin] + H2O = (2E)-4-hydroxy-3-methylbut-2-enyl diphosphate + 2 reduced [2Fe-2S]-[ferredoxin] + 2 H(+). Its pathway is isoprenoid biosynthesis; dimethylallyl diphosphate biosynthesis; dimethylallyl diphosphate from (2E)-4-hydroxy-3-methylbutenyl diphosphate: step 1/1. It participates in isoprenoid biosynthesis; isopentenyl diphosphate biosynthesis via DXP pathway; isopentenyl diphosphate from 1-deoxy-D-xylulose 5-phosphate: step 6/6. Catalyzes the conversion of 1-hydroxy-2-methyl-2-(E)-butenyl 4-diphosphate (HMBPP) into a mixture of isopentenyl diphosphate (IPP) and dimethylallyl diphosphate (DMAPP). Acts in the terminal step of the DOXP/MEP pathway for isoprenoid precursor biosynthesis. In Trichormus variabilis (strain ATCC 29413 / PCC 7937) (Anabaena variabilis), this protein is 4-hydroxy-3-methylbut-2-enyl diphosphate reductase.